The primary structure comprises 276 residues: Diaminopimelate epimerase (276 aa).

Residues Asn13, Gln46, and Asn66 each coordinate substrate. Cys75 (proton donor) is an active-site residue. Substrate-binding positions include 76–77 (GN), Asn159, Asn192, and 210–211 (ER). Cys219 (proton acceptor) is an active-site residue. Residue 220–221 (GT) coordinates substrate.

The protein belongs to the diaminopimelate epimerase family. Homodimer.

The protein localises to the cytoplasm. It carries out the reaction (2S,6S)-2,6-diaminopimelate = meso-2,6-diaminopimelate. It functions in the pathway amino-acid biosynthesis; L-lysine biosynthesis via DAP pathway; DL-2,6-diaminopimelate from LL-2,6-diaminopimelate: step 1/1. Its function is as follows. Catalyzes the stereoinversion of LL-2,6-diaminopimelate (L,L-DAP) to meso-diaminopimelate (meso-DAP), a precursor of L-lysine and an essential component of the bacterial peptidoglycan. This is Diaminopimelate epimerase from Pseudomonas syringae pv. syringae (strain B728a).